The primary structure comprises 548 residues: Chaperonin GroEL (548 aa).

Residues 30-33 (TLGP), lysine 51, 87-91 (DGTTT), glycine 415, 478-480 (NAA), and aspartate 494 contribute to the ATP site.

Belongs to the chaperonin (HSP60) family. Forms a cylinder of 14 subunits composed of two heptameric rings stacked back-to-back. Interacts with the co-chaperonin GroES.

The protein resides in the cytoplasm. The catalysed reaction is ATP + H2O + a folded polypeptide = ADP + phosphate + an unfolded polypeptide.. Together with its co-chaperonin GroES, plays an essential role in assisting protein folding. The GroEL-GroES system forms a nano-cage that allows encapsulation of the non-native substrate proteins and provides a physical environment optimized to promote and accelerate protein folding. The protein is Chaperonin GroEL of Trichlorobacter lovleyi (strain ATCC BAA-1151 / DSM 17278 / SZ) (Geobacter lovleyi).